The following is a 270-amino-acid chain: Phosphatidylglycerol--prolipoprotein diacylglyceryl transferase (270 aa).

4 helical membrane passes run 18–38, 55–75, 90–110, and 115–135; these read ITIYWYGVIIGTGVLIGLWLA, LVLFAVPIAIVCARAYYVLFE, WQGGLAIHGGLIGAVATGAVF, and GLSFWKLADIAAPSIILGQAI. Arg137 contacts a 1,2-diacyl-sn-glycero-3-phospho-(1'-sn-glycerol). Helical transmembrane passes span 177-197, 205-225, and 236-256; these read HPTFLYESLWNLVGFFLLLWL, GELFLSYLIWYSVGRFWIEGM, and LRAAQVVSVTLIVLSIALWIV.

The protein belongs to the Lgt family.

It is found in the cell membrane. It catalyses the reaction L-cysteinyl-[prolipoprotein] + a 1,2-diacyl-sn-glycero-3-phospho-(1'-sn-glycerol) = an S-1,2-diacyl-sn-glyceryl-L-cysteinyl-[prolipoprotein] + sn-glycerol 1-phosphate + H(+). It functions in the pathway protein modification; lipoprotein biosynthesis (diacylglyceryl transfer). Catalyzes the transfer of the diacylglyceryl group from phosphatidylglycerol to the sulfhydryl group of the N-terminal cysteine of a prolipoprotein, the first step in the formation of mature lipoproteins. This is Phosphatidylglycerol--prolipoprotein diacylglyceryl transferase from Geobacillus kaustophilus (strain HTA426).